A 525-amino-acid chain; its full sequence is Transcriptional regulatory protein TOD6 (525 aa).

The segment at 22 to 82 (GFSILSKHPH…NNPSSWDPSD (61 aa)) is disordered. Polar residues predominate over residues 35–47 (LVHSHSLSHTNAK). The span at 61-71 (STNKEEAESLK) shows a compositional bias: basic and acidic residues. The HTH myb-type domain maps to 67-124 (AESLKKNNPSSWDPSDDIKLRHLKEIKNLGWKEIAHHFPNRTPNACQFRWRRLKSGNL). The segment at residues 97–120 (WKEIAHHFPNRTPNACQFRWRRLK) is a DNA-binding region (H-T-H motif). S280 carries the phosphoserine modification. Residues 283 to 308 (PSTQIPHSTTKTRKNSHSVISSRRSS) are disordered. Residues 299 to 308 (HSVISSRRSS) show a composition bias toward low complexity. 3 positions are modified to phosphoserine: S333, S341, and S366. Residues 451-510 (TNEGCKDEEEEDDIDPLHKENGINTPSQQSQNYGMLEAKHDNPKSSELSSMTSANDIRNE) form a disordered region. 2 stretches are compositionally biased toward polar residues: residues 472-483 (GINTPSQQSQNY) and 495-506 (SSELSSMTSAND).

The protein belongs to the DOT6 family. As to quaternary structure, component of the RPD3C(L) complex composed of at least ASH1, CTI6, DEP1, DOT6, PHO23, RPD3, RXT2, RXT3, SAP30, SDS3, SIN3, TOD6; UME1 and UME6.

It localises to the cytoplasm. The protein resides in the nucleus. Functionally, component of the RPD3 histone deacetylase complex RPD3C(L) responsible for the deacetylation of lysine residues on the N-terminal part of the core histones (H2A, H2B, H3 and H4). Histone deacetylation gives a tag for epigenetic repression and plays an important role in transcriptional regulation, cell cycle progression and developmental events. TOD6 binds to sequences containing the core CGATG, which resembles the PAC (Polymerase A and C) motif. The chain is Transcriptional regulatory protein TOD6 (TOD6) from Saccharomyces cerevisiae (strain ATCC 204508 / S288c) (Baker's yeast).